The sequence spans 365 residues: MAKKIRVLIIDDSASIRQTLTHVLEQDPDIEIMAVASDPFMAARKLQEEIPDVITLDVEMPRMDGITFLRKLMSQRPIPVVMCSSLTEAGSETLLQALEAGAVDVILKSKIGAADSLSDDAMRIREVVKSASHARLSNVRRAAGTIRSASVEGPAKKLTADVMLPPPTGRAMAKTTEMVVCVGASTGGTEALREFLEELPANAPGMVIVQHMPEKFTAAFAKRLNGLCEVEVKEAVDGDPVLRGHVLIAPGDKHMLLERQGARYYVSVKTGPLVSRHRPSVDVLFRSAARSAGSNAMGIIMTGMGDDGARGMLEMHQAGAYTVAQDEASSVVFGMPKEAIAKGGVDRILPLDQIAREVLITQQKF.

Residues 6 to 123 enclose the Response regulatory domain; it reads RVLIIDDSAS…ADSLSDDAMR (118 aa). At Asp-57 the chain carries 4-aspartylphosphate. One can recognise a CheB-type methylesterase domain in the interval 173-359; that stretch reads AKTTEMVVCV…PLDQIAREVL (187 aa). Catalysis depends on residues Ser-185, His-211, and Asp-307.

This sequence belongs to the CheB family. Post-translationally, phosphorylated by CheA. Phosphorylation of the N-terminal regulatory domain activates the methylesterase activity.

It localises to the cytoplasm. It catalyses the reaction [protein]-L-glutamate 5-O-methyl ester + H2O = L-glutamyl-[protein] + methanol + H(+). The catalysed reaction is L-glutaminyl-[protein] + H2O = L-glutamyl-[protein] + NH4(+). Involved in chemotaxis. Part of a chemotaxis signal transduction system that modulates chemotaxis in response to various stimuli. Catalyzes the demethylation of specific methylglutamate residues introduced into the chemoreceptors (methyl-accepting chemotaxis proteins or MCP) by CheR. Also mediates the irreversible deamidation of specific glutamine residues to glutamic acid. The polypeptide is Protein-glutamate methylesterase/protein-glutamine glutaminase 2 (Rhizobium johnstonii (strain DSM 114642 / LMG 32736 / 3841) (Rhizobium leguminosarum bv. viciae)).